The chain runs to 1616 residues: Replicase large subunit (1616 aa).

Residues phenylalanine 50 to histidine 458 are methyltransferase. The Alphavirus-like MT domain maps to threonine 72–valine 281. The (+)RNA virus helicase ATP-binding domain maps to valine 801–arginine 963. The interval leucine 830 to threonine 1085 is helicase. Glycine 833–threonine 840 serves as a coordination point for ATP. The (+)RNA virus helicase C-terminal domain occupies arginine 964–glutamine 1116. Residues methionine 1380 to aspartate 1493 enclose the RdRp catalytic domain.

It belongs to the ssRNA positive-strand viruses RNA-directed RNA polymerase family. In terms of assembly, heterodimer of a large and a small subunit.

The catalysed reaction is RNA(n) + a ribonucleoside 5'-triphosphate = RNA(n+1) + diphosphate. The enzyme catalyses ATP + H2O = ADP + phosphate + H(+). In terms of biological role, is an RNA-dependent RNA polymerase active in viral RNA replication. Functionally, is a methyltransferase active in RNA capping and an RNA helicase. Methyltransferase displays a cytoplasmic capping enzyme activity. This function is necessary since all viral RNAs are synthesized in the cytoplasm, and host capping enzymes are restricted to the nucleus. Helicase region probably exhibits NTPase and RNA unwinding activities (Potential). It also acts as a suppressor of RNA-mediated gene silencing, also known as post-transcriptional gene silencing (PTGS), a mechanism of plant viral defense that limits the accumulation of viral RNAs. May mediate silencing suppression through either inhibition of HEN1-mediated siRNA or siRNA demethylation. The sequence is that of Replicase large subunit from Nicotiana tabacum (Common tobacco).